A 361-amino-acid polypeptide reads, in one-letter code: mRNA export factor ICP27 homolog (361 aa).

The segment covering 1–15 has biased composition (low complexity); the sequence is MEDSGNSSGSEASRS. The tract at residues 1–107 is disordered; sequence MEDSGNSSGS…SESARAAVSA (107 aa). Over residues 16–36 the composition is skewed to basic and acidic residues; that stretch reads GSEERRPVRERLGSRPPERRP. An RGG-box region spans residues 45 to 54; the sequence is RRRRGGRGGR. Residues 80-99 are compositionally biased toward basic and acidic residues; that stretch reads RQEADRPDGGPDAPPDRLSE. 4 residues coordinate Zn(2+): cysteine 253, histidine 328, cysteine 332, and cysteine 337. The CHC2-type zinc finger occupies 253-337; the sequence is CYLRDTPVDE…HKTGCDAPTC (85 aa).

It belongs to the HHV-1 ICP27 protein family. In terms of assembly, homodimer. Homodimerization is required for transactivation. Associates in a complex with RNA, and host export factors NXF1/TAP and ALYREF; these interactions allow nuclear export of viral transcripts. Interacts with three host shuttling SR proteins SRSF1, SRSF3 and SRSF7. Interacts with host SRPK1. Interacts with IE62; this interaction enhances IE62 transactivation.

The protein resides in the host cytoplasm. The protein localises to the host nucleus. In terms of biological role, multifunctional regulator of the expression of viral genes that mediates nuclear export of viral intronless mRNAs. This immediate early (EI) protein promotes the nuclear export of viral intronless mRNAs by interacting with mRNAs and host NXF1/TAP. This is mRNA export factor ICP27 homolog from Suid herpesvirus 1 (strain Kaplan) (SuHV-1).